The primary structure comprises 93 residues: Acylphosphatase (93 aa).

The Acylphosphatase-like domain occupies 5–93 (AKQIVVRGRV…PNFRGFQVTG (89 aa)). Residues Arg-20 and Asn-38 contribute to the active site.

The protein belongs to the acylphosphatase family.

It catalyses the reaction an acyl phosphate + H2O = a carboxylate + phosphate + H(+). The protein is Acylphosphatase (acyP) of Lacticaseibacillus paracasei (strain ATCC 334 / BCRC 17002 / CCUG 31169 / CIP 107868 / KCTC 3260 / NRRL B-441) (Lactobacillus paracasei).